The sequence spans 276 residues: MPELPEVETVRRTLTGLVKGKTIKSVEIRWPNIIKRPAEPEEFARKLAGETIQSIGRRGKFLLFHLDHYVMVSHLRMEGKYGLHQAEEPDDKHVHVIFTMTDGTQLRYRDVRKFGTMHLFKPGEEAGELPLSQLGPEPDAEEFTSAYLKDRLAKTNRAVKTALLDQKTVVGLGNIYVDEALFRAGVHPETKANQLSDKTIKTLHAEIKNTLQEAIDAGGSTVRSYINSQGEIGMFQLQHFVYGKKDEPCKNCGTMISKIVVGGRGTHFCAKCQTKK.

Proline 2 functions as the Schiff-base intermediate with DNA in the catalytic mechanism. The Proton donor role is filled by glutamate 3. Lysine 60 functions as the Proton donor; for beta-elimination activity in the catalytic mechanism. Positions 93 and 112 each coordinate DNA. The FPG-type zinc finger occupies 240-274; the sequence is FVYGKKDEPCKNCGTMISKIVVGGRGTHFCAKCQT. The active-site Proton donor; for delta-elimination activity is arginine 264.

Belongs to the FPG family. Monomer. Zn(2+) is required as a cofactor.

The catalysed reaction is Hydrolysis of DNA containing ring-opened 7-methylguanine residues, releasing 2,6-diamino-4-hydroxy-5-(N-methyl)formamidopyrimidine.. It catalyses the reaction 2'-deoxyribonucleotide-(2'-deoxyribose 5'-phosphate)-2'-deoxyribonucleotide-DNA = a 3'-end 2'-deoxyribonucleotide-(2,3-dehydro-2,3-deoxyribose 5'-phosphate)-DNA + a 5'-end 5'-phospho-2'-deoxyribonucleoside-DNA + H(+). Involved in the GO system responsible for removing an oxidatively damaged form of guanine (7,8-dihydro-8-oxoguanine, 8-oxo-dGTP) from DNA and the nucleotide pool. 8-oxo-dGTP is inserted opposite dA and dC residues of template DNA with almost equal efficiency thus leading to A.T to G.C transversions. Involved in base excision repair of DNA damaged by oxidation or by mutagenic agents. Acts as a DNA glycosylase that recognizes and removes damaged bases. Has a preference for oxidized purines, such as 8-oxo-dGTP. Has AP (apurinic/apyrimidinic) lyase activity and introduces nicks in the DNA strand. Cleaves the DNA backbone by beta-delta elimination to generate a single-strand break at the site of the removed base. The polypeptide is Formamidopyrimidine-DNA glycosylase (mutM) (Bacillus subtilis (strain 168)).